Reading from the N-terminus, the 54-residue chain is UPF0391 membrane protein Daro_2080 (54 aa).

2 helical membrane-spanning segments follow: residues 5-25 (AIVF…GIAA) and 30-50 (IAKI…VMGF).

This sequence belongs to the UPF0391 family.

It is found in the cell membrane. This chain is UPF0391 membrane protein Daro_2080, found in Dechloromonas aromatica (strain RCB).